Here is a 570-residue protein sequence, read N- to C-terminus: Sulfite reductase [NADPH] hemoprotein beta-component (570 aa).

[4Fe-4S] cluster-binding residues include Cys434, Cys440, Cys479, and Cys483. Siroheme is bound at residue Cys483.

The protein belongs to the nitrite and sulfite reductase 4Fe-4S domain family. Alpha(8)-beta(8). The alpha component is a flavoprotein, the beta component is a hemoprotein. Siroheme serves as cofactor. Requires [4Fe-4S] cluster as cofactor.

The catalysed reaction is hydrogen sulfide + 3 NADP(+) + 3 H2O = sulfite + 3 NADPH + 4 H(+). It functions in the pathway sulfur metabolism; hydrogen sulfide biosynthesis; hydrogen sulfide from sulfite (NADPH route): step 1/1. Its function is as follows. Component of the sulfite reductase complex that catalyzes the 6-electron reduction of sulfite to sulfide. This is one of several activities required for the biosynthesis of L-cysteine from sulfate. The sequence is that of Sulfite reductase [NADPH] hemoprotein beta-component from Enterobacter sp. (strain 638).